We begin with the raw amino-acid sequence, 351 residues long: AA9 family lytic polysaccharide monooxygenase A (351 aa).

A Cu(2+)-binding site is contributed by His-1. The cysteines at positions 52 and 178 are disulfide-linked. A glycan (N-linked (GlcNAc...) asparagine) is linked at Asn-53. His-86 is a Cu(2+) binding site. Residue Asn-138 is glycosylated (N-linked (GlcNAc...) asparagine). O2 contacts are provided by His-164 and Gln-173. Tyr-175 is a binding site for Cu(2+). Ser-280 carries the GPI-anchor amidated serine lipid modification. A propeptide spans 281–351 (SAIGTSTASS…RSGTLGRLSF (71 aa)) (removed in mature form).

This sequence belongs to the polysaccharide monooxygenase AA9 family. Cu(2+) is required as a cofactor.

It is found in the cell membrane. The enzyme catalyses [(1-&gt;4)-beta-D-glucosyl]n+m + reduced acceptor + O2 = 4-dehydro-beta-D-glucosyl-[(1-&gt;4)-beta-D-glucosyl]n-1 + [(1-&gt;4)-beta-D-glucosyl]m + acceptor + H2O.. Lytic polysaccharide monooxygenase (LPMO) that depolymerizes crystalline and amorphous polysaccharides via the oxidation of scissile alpha- or beta-(1-4)-glycosidic bonds, yielding C1 or C4 oxidation products. Catalysis by LPMOs requires the reduction of the active-site copper from Cu(II) to Cu(I) by a reducing agent and H(2)O(2) or O(2) as a cosubstrate. In terms of biological role, has broad specificity, cleaving at any position along the beta-glucan backbone of xyloglucan, regardless of substitutions. Shows minor activity on glucomannan. This chain is AA9 family lytic polysaccharide monooxygenase A, found in Gloeophyllum trabeum (Brown rot fungus).